The chain runs to 141 residues: Large ribosomal subunit protein uL16c (141 aa).

Residues 1–17 (MLSPRRTKYRKQHRGRL) are compositionally biased toward basic residues. The interval 1-20 (MLSPRRTKYRKQHRGRLKGT) is disordered.

It belongs to the universal ribosomal protein uL16 family. In terms of assembly, part of the 50S ribosomal subunit.

It localises to the plastid. The protein localises to the chloroplast. The polypeptide is Large ribosomal subunit protein uL16c (Staurastrum punctulatum (Green alga)).